The chain runs to 238 residues: 1-(5-phosphoribosyl)-5-[(5-phosphoribosylamino)methylideneamino] imidazole-4-carboxamide isomerase (238 aa).

D8 functions as the Proton acceptor in the catalytic mechanism. D129 acts as the Proton donor in catalysis.

It belongs to the HisA/HisF family.

It is found in the cytoplasm. The enzyme catalyses 1-(5-phospho-beta-D-ribosyl)-5-[(5-phospho-beta-D-ribosylamino)methylideneamino]imidazole-4-carboxamide = 5-[(5-phospho-1-deoxy-D-ribulos-1-ylimino)methylamino]-1-(5-phospho-beta-D-ribosyl)imidazole-4-carboxamide. It functions in the pathway amino-acid biosynthesis; L-histidine biosynthesis; L-histidine from 5-phospho-alpha-D-ribose 1-diphosphate: step 4/9. In Anaeromyxobacter dehalogenans (strain 2CP-C), this protein is 1-(5-phosphoribosyl)-5-[(5-phosphoribosylamino)methylideneamino] imidazole-4-carboxamide isomerase.